The chain runs to 100 residues: UPF0045 protein MJ1052 (100 aa).

Belongs to the UPF0045 family.

In Methanocaldococcus jannaschii (strain ATCC 43067 / DSM 2661 / JAL-1 / JCM 10045 / NBRC 100440) (Methanococcus jannaschii), this protein is UPF0045 protein MJ1052.